Consider the following 692-residue polypeptide: Methionine--tRNA ligase (692 aa).

The 'HIGH' region motif lies at 26 to 36 (PYANGSIHLGH). Residues cysteine 157, cysteine 160, cysteine 170, and cysteine 173 each contribute to the Zn(2+) site. The 'KMSKS' region signature appears at 342-346 (KMSKS). Residue lysine 345 coordinates ATP. Residues 590 to 692 (DFAKVDLRIA…SGAQPGMRVK (103 aa)) enclose the tRNA-binding domain.

This sequence belongs to the class-I aminoacyl-tRNA synthetase family. MetG type 1 subfamily. As to quaternary structure, homodimer. Zn(2+) serves as cofactor.

The protein localises to the cytoplasm. It catalyses the reaction tRNA(Met) + L-methionine + ATP = L-methionyl-tRNA(Met) + AMP + diphosphate. In terms of biological role, is required not only for elongation of protein synthesis but also for the initiation of all mRNA translation through initiator tRNA(fMet) aminoacylation. This chain is Methionine--tRNA ligase, found in Methylobacillus flagellatus (strain ATCC 51484 / DSM 6875 / VKM B-1610 / KT).